Consider the following 101-residue polypeptide: MIPGELITDGPDHLLNEGRRTVTLVVQNTADRPIQVGSHYHFAETNAALGFDRDAARGMRLNIASGTAVRFEPGQQRTVELVDFAGERKIYGFRGLIQGAL.

Belongs to the urease beta subunit family. Heterotrimer of UreA (gamma), UreB (beta) and UreC (alpha) subunits. Three heterotrimers associate to form the active enzyme.

It is found in the cytoplasm. The enzyme catalyses urea + 2 H2O + H(+) = hydrogencarbonate + 2 NH4(+). The protein operates within nitrogen metabolism; urea degradation; CO(2) and NH(3) from urea (urease route): step 1/1. In Polaromonas naphthalenivorans (strain CJ2), this protein is Urease subunit beta.